The chain runs to 265 residues: Metallo-beta-lactamase VIM-7 (265 aa).

The first 17 residues, 1–17 (MFQIRSFLVGISAFVMA), serve as a signal peptide directing secretion. Zn(2+) contacts are provided by histidine 113, histidine 115, aspartate 117, histidine 178, cysteine 197, and histidine 239.

This sequence belongs to the metallo-beta-lactamase superfamily. Class-B beta-lactamase family. In terms of assembly, monomer. Requires Zn(2+) as cofactor.

The protein localises to the periplasm. It carries out the reaction a beta-lactam + H2O = a substituted beta-amino acid. Class B beta-lactamase which confers resistance to the beta-lactam antibiotics, including penicillins, cephalosporins and carbapenems. Acts via hydrolysis of the beta-lactam ring. Has penicillin-, cephalosporin- and carbapenem-hydrolyzing activities. The polypeptide is Metallo-beta-lactamase VIM-7 (Pseudomonas aeruginosa).